A 318-amino-acid chain; its full sequence is Putative fimbrium tip subunit Fim1F (318 aa).

Positions 1–24 (MRFNVVLFMLIVALLGGLSTCSSE) are cleaved as a signal peptide. Positions 25-50 (VPIGFDTDELSFDMSLVLLTGDMQTK) are excised as a propeptide.

Belongs to the bacteroidetes fimbrillin superfamily. FimA/Mfa1 family. In terms of assembly, may be part of the fimbrial tip.

The protein resides in the fimbrium. In terms of biological role, putative component of the fimbrium tip. Fimbriae are filamentous appendages on the cell surface that mediate cell adhesion and biofilm formation. The polypeptide is Putative fimbrium tip subunit Fim1F (Parabacteroides distasonis (strain ATCC 8503 / DSM 20701 / CIP 104284 / JCM 5825 / NCTC 11152)).